The following is a 444-amino-acid chain: Trigger factor (444 aa).

The PPIase FKBP-type domain maps to glycine 161–proline 246.

The protein belongs to the FKBP-type PPIase family. Tig subfamily.

Its subcellular location is the cytoplasm. It catalyses the reaction [protein]-peptidylproline (omega=180) = [protein]-peptidylproline (omega=0). Its function is as follows. Involved in protein export. Acts as a chaperone by maintaining the newly synthesized protein in an open conformation. Functions as a peptidyl-prolyl cis-trans isomerase. The chain is Trigger factor from Saccharophagus degradans (strain 2-40 / ATCC 43961 / DSM 17024).